The following is a 641-amino-acid chain: DNA mismatch repair protein MutL (641 aa).

Residues 345-445 (PAAVAPPAPA…GDTSLGDTSP (101 aa)) form a disordered region. Residues 419-429 (PRTEPATRTGE) are compositionally biased toward basic and acidic residues. Residues 432–442 (GISSGDTSLGD) show a composition bias toward polar residues.

Belongs to the DNA mismatch repair MutL/HexB family.

In terms of biological role, this protein is involved in the repair of mismatches in DNA. It is required for dam-dependent methyl-directed DNA mismatch repair. May act as a 'molecular matchmaker', a protein that promotes the formation of a stable complex between two or more DNA-binding proteins in an ATP-dependent manner without itself being part of a final effector complex. The protein is DNA mismatch repair protein MutL of Azotobacter vinelandii (strain DJ / ATCC BAA-1303).